The primary structure comprises 196 residues: Small ribosomal subunit protein uS4c (196 aa).

Residues 89–157 (MRLDNILFRL…VQNYIASSDP (69 aa)) enclose the S4 RNA-binding domain.

It belongs to the universal ribosomal protein uS4 family. In terms of assembly, part of the 30S ribosomal subunit. Contacts protein S5. The interaction surface between S4 and S5 is involved in control of translational fidelity.

The protein localises to the plastid. Its subcellular location is the chloroplast. Its function is as follows. One of the primary rRNA binding proteins, it binds directly to 16S rRNA where it nucleates assembly of the body of the 30S subunit. Functionally, with S5 and S12 plays an important role in translational accuracy. The chain is Small ribosomal subunit protein uS4c (rps4) from Elymus canadensis (Canada wild rye).